Reading from the N-terminus, the 391-residue chain is Succinyl-diaminopimelate desuccinylase (391 aa).

A Zn(2+)-binding site is contributed by His67. Asp69 is a catalytic residue. Position 101 (Asp101) interacts with Zn(2+). Glu135 serves as the catalytic Proton acceptor. The Zn(2+) site is built by Glu136, Glu164, and His353.

The protein belongs to the peptidase M20A family. DapE subfamily. Homodimer. Requires Zn(2+) as cofactor. Co(2+) serves as cofactor.

The enzyme catalyses N-succinyl-(2S,6S)-2,6-diaminopimelate + H2O = (2S,6S)-2,6-diaminopimelate + succinate. Its pathway is amino-acid biosynthesis; L-lysine biosynthesis via DAP pathway; LL-2,6-diaminopimelate from (S)-tetrahydrodipicolinate (succinylase route): step 3/3. Functionally, catalyzes the hydrolysis of N-succinyl-L,L-diaminopimelic acid (SDAP), forming succinate and LL-2,6-diaminopimelate (DAP), an intermediate involved in the bacterial biosynthesis of lysine and meso-diaminopimelic acid, an essential component of bacterial cell walls. This chain is Succinyl-diaminopimelate desuccinylase, found in Rickettsia bellii (strain RML369-C).